The sequence spans 441 residues: Arginine biosynthesis bifunctional protein ArgJ, mitochondrial (441 aa).

The transit peptide at 1-8 directs the protein to the mitochondrion; it reads MRISSTLL. Threonine 177, lysine 204, threonine 215, glutamate 301, asparagine 436, and serine 441 together coordinate substrate. The active-site Nucleophile is threonine 215.

This sequence belongs to the ArgJ family. As to quaternary structure, heterodimer of an alpha and a beta chain. The alpha and beta chains are autoproteolytically processed from a single precursor protein within the mitochondrion.

Its subcellular location is the mitochondrion matrix. The enzyme catalyses N(2)-acetyl-L-ornithine + L-glutamate = N-acetyl-L-glutamate + L-ornithine. The catalysed reaction is L-glutamate + acetyl-CoA = N-acetyl-L-glutamate + CoA + H(+). It functions in the pathway amino-acid biosynthesis; L-arginine biosynthesis; L-ornithine and N-acetyl-L-glutamate from L-glutamate and N(2)-acetyl-L-ornithine (cyclic): step 1/1. It participates in amino-acid biosynthesis; L-arginine biosynthesis; N(2)-acetyl-L-ornithine from L-glutamate: step 1/4. In terms of biological role, catalyzes two activities which are involved in the cyclic version of arginine biosynthesis: the synthesis of acetylglutamate from glutamate and acetyl-CoA, and of ornithine by transacetylation between acetylornithine and glutamate. In Saccharomyces cerevisiae (strain Lalvin EC1118 / Prise de mousse) (Baker's yeast), this protein is Arginine biosynthesis bifunctional protein ArgJ, mitochondrial.